The following is a 590-amino-acid chain: L-fucose isomerase (590 aa).

Residues E337 and D361 each act as proton acceptor in the active site. Residues E337, D361, and H528 each coordinate Mn(2+).

This sequence belongs to the L-fucose isomerase family. Mn(2+) serves as cofactor.

Its subcellular location is the cytoplasm. The catalysed reaction is L-fucose = L-fuculose. Its pathway is carbohydrate degradation; L-fucose degradation; L-lactaldehyde and glycerone phosphate from L-fucose: step 1/3. In terms of biological role, converts the aldose L-fucose into the corresponding ketose L-fuculose. This chain is L-fucose isomerase, found in Bacteroides fragilis (strain ATCC 25285 / DSM 2151 / CCUG 4856 / JCM 11019 / LMG 10263 / NCTC 9343 / Onslow / VPI 2553 / EN-2).